A 61-amino-acid chain; its full sequence is Small ribosomal subunit protein uS14 (61 aa).

Zn(2+) contacts are provided by cysteine 24, cysteine 27, cysteine 40, and cysteine 43.

It belongs to the universal ribosomal protein uS14 family. Zinc-binding uS14 subfamily. As to quaternary structure, part of the 30S ribosomal subunit. Contacts proteins S3 and S10. Requires Zn(2+) as cofactor.

Its function is as follows. Binds 16S rRNA, required for the assembly of 30S particles and may also be responsible for determining the conformation of the 16S rRNA at the A site. This chain is Small ribosomal subunit protein uS14, found in Mycoplasma mobile (strain ATCC 43663 / 163K / NCTC 11711) (Mesomycoplasma mobile).